Consider the following 226-residue polypeptide: MLLRIANVFSREETARIRVALEQAAWQDGRVTAGYQSAKAKHNLQLAEDDPLAREIAEAMLQRLWQHPQFMSAALPSKVFPPLFNCYTAGGEFGYHIDNAVRQVRNSAERVRTDLSATLFFSDPDEYDGGDLVIQDTYGTQRVKFAAGDMVLYPSTSLHKVEPVTRGARLASFFWIQSLVREDAQRTLLYEMDQAIQQLTADVPDHPSLVQLTGTYHNLLRRWVEV.

Residues 78-178 form the Fe2OG dioxygenase domain; it reads KVFPPLFNCY…RLASFFWIQS (101 aa). Fe cation contacts are provided by His-96, Asp-98, and His-159. Arg-169 is a binding site for 2-oxoglutarate.

Fe(2+) is required as a cofactor. L-ascorbate serves as cofactor.

The protein is PKHD-type hydroxylase PST_0995 of Stutzerimonas stutzeri (strain A1501) (Pseudomonas stutzeri).